Reading from the N-terminus, the 91-residue chain is Small ribosomal subunit protein uS15 (91 aa).

The protein belongs to the universal ribosomal protein uS15 family. In terms of assembly, part of the 30S ribosomal subunit. Forms a bridge to the 50S subunit in the 70S ribosome, contacting the 23S rRNA.

One of the primary rRNA binding proteins, it binds directly to 16S rRNA where it helps nucleate assembly of the platform of the 30S subunit by binding and bridging several RNA helices of the 16S rRNA. Its function is as follows. Forms an intersubunit bridge (bridge B4) with the 23S rRNA of the 50S subunit in the ribosome. This Deinococcus geothermalis (strain DSM 11300 / CIP 105573 / AG-3a) protein is Small ribosomal subunit protein uS15.